We begin with the raw amino-acid sequence, 138 residues long: Phospholipase A2 group V (138 aa).

The N-terminal stretch at 1-20 (MKGLLPLAWFLACSVPAVQG) is a signal peptide. Intrachain disulfides connect Cys-46/Cys-137, Cys-48/Cys-64, Cys-63/Cys-117, Cys-70/Cys-110, Cys-79/Cys-103, and Cys-97/Cys-108. Ca(2+)-binding residues include Tyr-47, Gly-49, and Gly-51. Residue His-67 is part of the active site. Ca(2+) is bound at residue Asp-68. The active site involves Asp-111.

This sequence belongs to the phospholipase A2 family. Requires Ca(2+) as cofactor. In terms of processing, this enzyme lacks one of the seven disulfide bonds found in similar PLA2 proteins. Heart, placenta and less abundantly, in lung. Detected in the outer and inner plexiform layers of the retina (at protein level). Expressed in monocytes and macrophages.

It localises to the secreted. The protein localises to the cell membrane. It is found in the cytoplasmic vesicle. Its subcellular location is the phagosome. The protein resides in the recycling endosome. It localises to the golgi apparatus. The protein localises to the cis-Golgi network. It is found in the trans-Golgi network. It carries out the reaction a 1,2-diacyl-sn-glycero-3-phosphocholine + H2O = a 1-acyl-sn-glycero-3-phosphocholine + a fatty acid + H(+). The enzyme catalyses 1-hexadecanoyl-2-(9Z-octadecenoyl)-sn-glycero-3-phosphocholine + H2O = 1-hexadecanoyl-sn-glycero-3-phosphocholine + (9Z)-octadecenoate + H(+). It catalyses the reaction 1-hexadecanoyl-2-(5Z,8Z,11Z,14Z-eicosatetraenoyl)-sn-glycero-3-phosphocholine + H2O = 1-hexadecanoyl-sn-glycero-3-phosphocholine + (5Z,8Z,11Z,14Z)-eicosatetraenoate + H(+). The catalysed reaction is 1-hexadecanoyl-2-(9Z,12Z-octadecadienoyl)-sn-glycero-3-phosphoethanolamine + H2O = 1-hexadecanoyl-sn-glycero-3-phosphoethanolamine + (9Z,12Z)-octadecadienoate + H(+). It carries out the reaction 1-hexadecanoyl-2-(5Z,8Z,11Z,14Z-eicosatetraenoyl)-sn-glycero-3-phosphoethanolamine + H2O = 1-hexadecanoyl-sn-glycero-3-phosphoethanolamine + (5Z,8Z,11Z,14Z)-eicosatetraenoate + H(+). The enzyme catalyses 1-octadecanoyl-2-(5Z,8Z,11Z,14Z-eicosatetraenoyl)-sn-glycero-3-phospho-(1D-myo-inositol) + H2O = 1-octadecanoyl-sn-glycero-3-phospho-(1D-myo-inositol) + (5Z,8Z,11Z,14Z)-eicosatetraenoate + H(+). It catalyses the reaction 1-hexadecanoyl-2-(9Z-octadecenoyl)-sn-glycero-3-phosphoglycerol + H2O = 1-hexadecanoyl-sn-glycero-3-phosphoglycerol + (9Z)-octadecenoate + H(+). The catalysed reaction is N-hexadecanoyl-1,2-di-(9Z-octadecenoyl)-sn-glycero-3-phosphoethanolamine + H2O = N-hexadecanoyl-1-(9Z-octadecenoyl)-sn-glycero-3-phosphoethanolamine + (9Z)-octadecenoate + H(+). It carries out the reaction 1'-[1,2-di-(9Z-octadecenoyl)-sn-glycero-3-phospho]-3'-[1-(9Z-octadecenoyl)-sn-glycero-3-phospho]-glycerol + H2O = 1',3'-bis-[1-(9Z-octadecenoyl)-sn-glycero-3-phospho]-glycerol + (9Z)-octadecenoate + H(+). The enzyme catalyses 1',3'-bis[1,2-di-(9Z-octadecenoyl)-sn-glycero-3-phospho]-glycerol + H2O = 1'-[1,2-di-(9Z-octadecenoyl)-sn-glycero-3-phospho]-3'-[1-(9Z-octadecenoyl)-sn-glycero-3-phospho]-glycerol + (9Z)-octadecenoate + H(+). It participates in lipid metabolism; phospholipid metabolism. The protein operates within lipid metabolism; leukotriene B4 biosynthesis. Its pathway is lipid metabolism; leukotriene C4 biosynthesis. Its activity is regulated as follows. Activated by cardiolipin. In terms of biological role, secretory calcium-dependent phospholipase A2 that primarily targets extracellular phospholipids. Hydrolyzes the ester bond of the fatty acyl group attached at sn-2 position of phospholipids (phospholipase A2 activity), preferentially releasing fatty acyl groups with a low degree of unsaturation such as oleoyl (C18:1) and linoleoyl (C18:2) groups. Hydrolyzes low-density lipoprotein (LDL) phospholipids releasing unsaturated fatty acids that drive macrophage polarization toward an M2 phenotype. May act in an autocrine and paracrine manner. Contributes to lipid remodeling of cellular membranes at different subcellular locations and generation of lipid mediators involved in pathogen clearance. Cleaves sn-2 fatty acyl chains of cardiolipin, a major component of the inner membrane of mitochondria and bacterial membranes. Promotes phagocytosis of bacteria in macrophages through production of lysophosphatidylethanolamines. Displays bactericidal activity against Gram-positive bacteria by directly hydrolyzing phospholipids of the bacterial membrane. Promotes phagocytosis and killing of ingested fungi likely through controlling phagosome-lysosome fusion and phagosome maturation. Plays a role in biosynthesis of cysteinyl leukotrienes (CysLTs) in myeloid cells. In eosinophils, triggers perinuclear arachidonate release and LTC4 synthesis in a PLA2G4A-independent way. In neutrophils, amplifies CysLTs biosynthesis initiated by PLA2G4A. Promotes immune complex clearance in macrophages via stimulating synthesis of CysLTs, which act through CYSLTR1 to trigger phagocytosis. May regulate antigen processing in antigen-presenting cells. In pulmonary macrophages regulates IL33 production required for activation of group 2 innate lymphoid cells. May play a role in the biosynthesis of N-acyl ethanolamines that regulate energy metabolism. Hydrolyzes N-acyl phosphatidylethanolamines to N-acyl lysophosphatidylethanolamines, which are further cleaved by a lysophospholipase D to release N-acyl ethanolamines. This is Phospholipase A2 group V (PLA2G5) from Homo sapiens (Human).